The following is a 166-amino-acid chain: Large ribosomal subunit protein uL11x (166 aa).

Belongs to the universal ribosomal protein uL11 family.

In terms of biological role, binds directly to 26S ribosomal RNA. This chain is Large ribosomal subunit protein uL11x (RPL12C), found in Arabidopsis thaliana (Mouse-ear cress).